The sequence spans 471 residues: 3-isopropylmalate dehydratase large subunit (471 aa).

[4Fe-4S] cluster contacts are provided by Cys347, Cys409, and Cys412.

The protein belongs to the aconitase/IPM isomerase family. LeuC type 1 subfamily. As to quaternary structure, heterodimer of LeuC and LeuD. It depends on [4Fe-4S] cluster as a cofactor.

The catalysed reaction is (2R,3S)-3-isopropylmalate = (2S)-2-isopropylmalate. It participates in amino-acid biosynthesis; L-leucine biosynthesis; L-leucine from 3-methyl-2-oxobutanoate: step 2/4. Functionally, catalyzes the isomerization between 2-isopropylmalate and 3-isopropylmalate, via the formation of 2-isopropylmaleate. The sequence is that of 3-isopropylmalate dehydratase large subunit from Buchnera aphidicola subsp. Rhopalosiphum padi.